The sequence spans 680 residues: DNA ligase (680 aa).

NAD(+)-binding positions include 35 to 39 (DADFD), 86 to 87 (SL), and Glu-111. The active-site N6-AMP-lysine intermediate is Lys-113. NAD(+) contacts are provided by Arg-134, Glu-174, Lys-290, and Lys-314. Cys-408, Cys-411, Cys-427, and Cys-433 together coordinate Zn(2+). In terms of domain architecture, BRCT spans 597–680 (VAEQTLEGLT…RLLNTGSADE (84 aa)).

This sequence belongs to the NAD-dependent DNA ligase family. LigA subfamily. The cofactor is Mg(2+). Mn(2+) is required as a cofactor.

The catalysed reaction is NAD(+) + (deoxyribonucleotide)n-3'-hydroxyl + 5'-phospho-(deoxyribonucleotide)m = (deoxyribonucleotide)n+m + AMP + beta-nicotinamide D-nucleotide.. Functionally, DNA ligase that catalyzes the formation of phosphodiester linkages between 5'-phosphoryl and 3'-hydroxyl groups in double-stranded DNA using NAD as a coenzyme and as the energy source for the reaction. It is essential for DNA replication and repair of damaged DNA. In Corynebacterium glutamicum (strain ATCC 13032 / DSM 20300 / JCM 1318 / BCRC 11384 / CCUG 27702 / LMG 3730 / NBRC 12168 / NCIMB 10025 / NRRL B-2784 / 534), this protein is DNA ligase.